Reading from the N-terminus, the 423-residue chain is Steroid hormone receptor ERR1 (423 aa).

The interval 1-67 is disordered; that stretch reads MSSQVVGIEP…GAGPGEQGGG (67 aa). Residues 1–76 are repressor domain; sequence MSSQVVGIEP…GKLVLSSLPK (76 aa). Lys14 participates in a covalent cross-link: Glycyl lysine isopeptide (Lys-Gly) (interchain with G-Cter in SUMO). Phosphoserine is present on residues Ser19 and Ser22. Gly residues predominate over residues 58-67; it reads GAGPGEQGGG. Residues 76–151 constitute a DNA-binding region (nuclear receptor); sequence KRLCLVCGDV…VGMLKEGVRL (76 aa). NR C4-type zinc fingers lie at residues 79–99 and 115–134; these read CLVC…CEAC and CPAS…CQAC. 4 positions are modified to N6-acetyllysine; by PCAF/KAT2B: Lys129, Lys138, Lys160, and Lys162. Lys189 participates in a covalent cross-link: Glycyl lysine isopeptide (Lys-Gly) (interchain with G-Cter in SUMO2). Residues 193–421 form the NR LBD domain; that stretch reads PVNALVSHLL…KLFLEMLEAM (229 aa). A Glycyl lysine isopeptide (Lys-Gly) (interchain with G-Cter in SUMO); alternate cross-link involves residue Lys403. Residue Lys403 forms a Glycyl lysine isopeptide (Lys-Gly) (interchain with G-Cter in SUMO2); alternate linkage. The AF-2 domain stretch occupies residues 403 to 423; the sequence is KLEGKVPMHKLFLEMLEAMMD.

It belongs to the nuclear hormone receptor family. NR3 subfamily. As to quaternary structure, binds DNA as a monomer or a homodimer. Interacts (via the AF2 domain) with coactivator PPARGC1A (via the L3 motif); the interaction greatly enhances transcriptional activity of genes involved in energy metabolism. Interacts with PIAS4; the interaction enhances sumoylation. Interacts with MAPK15; promotes re-localization of ESRRA to the cytoplasm through a XPO1-dependent mechanism then inhibits ESRRA transcriptional activity. Post-translationally, phosphorylation on Ser-19 enhances sumoylation on Lys-14 increasing repression of transcriptional activity. Sumoylated with SUMO2. Main site is Lys-14 which is enhanced by phosphorylation on Ser-19, cofactor activation, and by interaction with PIAS4. Sumoylation enhances repression of transcriptional activity, but has no effect on subcellular location nor on DNA binding. In terms of processing, reversibly acetylated. Acetylation by PCAF/KAT2 at Lys-129, Lys-138, Lys-160 and Lys-162 and PCAF/KAT2 decreases transcriptional activity probably by inhibiting DNA-binding activity; deacetylation involves SIRT1 and HDAC8 and increases DNA-binding.

It is found in the nucleus. The protein resides in the cytoplasm. In terms of biological role, binds to an ERR-alpha response element (ERRE) containing a single consensus half-site, 5'-TNAAGGTCA-3'. Can bind to the medium-chain acyl coenzyme A dehydrogenase (MCAD) response element NRRE-1 and may act as an important regulator of MCAD promoter. Binds to the C1 region of the lactoferrin gene promoter. Requires dimerization and the coactivator, PGC-1A, for full activity. The ERRalpha/PGC1alpha complex is a regulator of energy metabolism. Induces the expression of PERM1 in the skeletal muscle. This is Steroid hormone receptor ERR1 (ESRRA) from Homo sapiens (Human).